We begin with the raw amino-acid sequence, 878 residues long: MNQQYSAMRSNVSMLGKLLGDTIKEALGEEILDKVESIRKLSKSSRAGNEVQRQKLLLTLQNLSNDELLPVARAFNQFLNLTNVAEQYHSISPHGEAASNPVALAKLIERLKDKNFTNQQLKQAVEQISIELVLTAHPTEIARRTLIHKLVEVNTCLSQLDHDDLADYERTNIMRRLRQLVAQSWHTDEIRKIRPTPIDEAKWGFAVVENSLWEGVPAFLREFNEQLEESIDYNLPVEASPIRFTSWMGGDRDGNPNVTAEITRHALLLSRWKAADLFLNDIQVLVSELSMTESTPELRELAGGADVAEPYREIAKQLRTRLQVTRDYLEQRIKGQQSLPPEGLLIDNSALWEPLYACYQSLHQCGMRIIANGQLLDTLRRIRCFGLQLVRLDIRQESTNHTEALSELTQYLELGDYASWSEEQKQTFLLTELNSKRPLIPTHWQPSEATKEVFETCRVIAESPKDSIASYVISMAKVPSDVLAVKLLLKEAGADIRLPVAPLFETLEDLNNAESVMTRLFDIPWYRDLIDNKQMVMIGYSDSAKDAGVMAASWAQYRAQDALIKLCEKSGVTLTLFHGRGGTIGRGGAPAHAALLSQPPGSLKGGLRVTEQGEMIRFKFGLPQVTISSLAHYAGAILEANLLPPPEPKTAWIEVMDALSDVSCEMYRGYVRGEKDFVPYFRAATPEGELGKLPLGSRPAKRRPTGGVETLRAIPWIFAWTQNRLMLPAWLGAGAALQHEIDNGKQAVLDDMCENWPFFNTRIAMLEMVYAKADLWLAEYYDQRLVEENLWPLGAKLRQQLSDDIKSVLAISKDEHLMADLPWVAESIALRNVYTDPLNVLQAELLQRSRTHSESDPRIEQALMVTIAGIAAGMRNTG.

Residues His137 and Lys545 contribute to the active site.

It belongs to the PEPCase type 1 family. Mg(2+) serves as cofactor.

The enzyme catalyses oxaloacetate + phosphate = phosphoenolpyruvate + hydrogencarbonate. Forms oxaloacetate, a four-carbon dicarboxylic acid source for the tricarboxylic acid cycle. The chain is Phosphoenolpyruvate carboxylase from Proteus mirabilis (strain HI4320).